We begin with the raw amino-acid sequence, 65 residues long: Large ribosomal subunit protein bL33m (65 aa).

Residues 1 to 8 (MFLSAVTF) constitute a mitochondrion transit peptide.

This sequence belongs to the bacterial ribosomal protein bL33 family. Component of the mitochondrial ribosome large subunit (39S) which comprises a 16S rRNA and about 50 distinct proteins.

Its subcellular location is the mitochondrion. In Bos taurus (Bovine), this protein is Large ribosomal subunit protein bL33m (MRPL33).